The primary structure comprises 106 residues: Urease subunit beta (106 aa).

It belongs to the urease beta subunit family. Heterotrimer of UreA (gamma), UreB (beta) and UreC (alpha) subunits. Three heterotrimers associate to form the active enzyme.

Its subcellular location is the cytoplasm. It carries out the reaction urea + 2 H2O + H(+) = hydrogencarbonate + 2 NH4(+). The protein operates within nitrogen metabolism; urea degradation; CO(2) and NH(3) from urea (urease route): step 1/1. The chain is Urease subunit beta from Prochlorococcus marinus (strain NATL1A).